The chain runs to 192 residues: uncharacterized protein (192 aa).

In terms of domain architecture, Nudix hydrolase spans 29 to 160 (HRQAAVLIPI…PLDIYRRGDS (132 aa)). The Nudix box signature appears at 67–89 (GAVDDTDASVIAAALREAEEEVA). Residues E83 and E87 each contribute to the Mg(2+) site.

This sequence belongs to the Nudix hydrolase family. PCD1 subfamily. Requires Mn(2+) as cofactor. The cofactor is Mg(2+).

In terms of biological role, probably mediates the hydrolysis of some nucleoside diphosphate derivatives. This is an uncharacterized protein from Shigella flexneri.